The sequence spans 177 residues: Chorismate pyruvate-lyase (177 aa).

The substrate site is built by Met-36, Arg-78, Leu-116, and Glu-157.

It belongs to the UbiC family. Monomer.

It is found in the cytoplasm. The enzyme catalyses chorismate = 4-hydroxybenzoate + pyruvate. It participates in cofactor biosynthesis; ubiquinone biosynthesis. In terms of biological role, removes the pyruvyl group from chorismate, with concomitant aromatization of the ring, to provide 4-hydroxybenzoate (4HB) for the ubiquinone pathway. The sequence is that of Chorismate pyruvate-lyase from Pectobacterium carotovorum subsp. carotovorum (strain PC1).